The chain runs to 425 residues: Protein let-756 (425 aa).

Disordered regions lie at residues 277–298 and 314–425; these read LEEK…LRKE and EEEL…QRYP. Residues 281–291 show a composition bias toward basic residues; the sequence is KRRREKKKRRR. Residues 329–340 are compositionally biased toward polar residues; that stretch reads ASTQTRYNRPQN. The span at 378 to 389 shows a compositional bias: basic residues; the sequence is HNSHHHHHHHPR. The span at 395 to 425 shows a compositional bias: polar residues; that stretch reads DPQQRHQSQQHYLAQTVSNPNRQNVNYQRYP.

It belongs to the heparin-binding growth factors family. Interacts with pal-1. Expressed in pharynx, CAN neuron and body wall muscles.

It is found in the nucleus. It localises to the membrane. Functionally, required for larval development. Probably by binding receptor egl-15, negatively regulates membrane protrusion from body wall muscles during larval development. This Caenorhabditis elegans protein is Protein let-756 (let-756).